Here is a 1400-residue protein sequence, read N- to C-terminus: MNQEVMNLFNPQAPAQTFDSIRISIASPEKILSWSYGEIKKPETINYRTFKPERDGLFCARIFGPIKDYECLCGKYKRMKYKGIICEKCGVEVTLSRVRRERMGHIELAAPVAHIWFLKSLPSRIGTLLDMTLKDIERVLYFENYIVTEPGLTSLKEHQLLSEEEYMIAVDEFGEDQFTALIGAEAIYELLASMELEKIAADLRVDLAETTSDLKQKKLMKRLKIVENFLESGNRPEWMIMKIVPVIPPDLRPLVPLDGGRFATSDLNDLYRRVINRNNRLKRLIELRAPGIIIRNEKRMLQEAVDALFDNGRRGRVITGANKRPLKSLSDMLKGKQGRFRQNLLGKRVDYSGRSVIVTGPELKLHQCGLPKKMALELFKPFIYARLDAKGYSSTVKQAKKLVEKERPEVWDILDEVIREHPVLLNRAPTLHRLGIQAFEPTLIEGKAIQLHPLVCTAFNADFDGDQMAVHVPLSLEAQLEARVLMMSTNNILHPANGAPIIVPSQDMVLGLYYLSIVADKEPGEGMMFADMGELQHALENKVVTLHTKIKGRFKTVDAEGKPVSKIYDTTPGRMITGELLPKNVNVPFDICNQEMTKKNISKMIDHVYRHCGQKETVIFCDRIMQLGFAHACRAGISFGKDDMVIPDTKAKIVADTEALTTEYEQQYNDGLITQGEKYNKVVDAWGKATDKITEEMMARLKAVEFDPVTGRQKQMNSVYMMSHSGARGSVNQMRQLGGMRGLMAKPSGEIIETPIISNFKEGLTVNEYFNSTHGARKGLADTALKTANSGYLTRRLVDVAQDAIISEVDCGAEIGLTMQPIVDAGQIVASIGQRVLGRTALDPILHPTTGEVIVEAGRMIEEKDVEIIEKAAIQSIRIRSALTCETRNGVCAKCYGRDLARGTPVNQGEAVGVIAAQSIGEPGTQLTMRTFHLGGTAQVVDSSYLEASYEGTVKLRNRNVVRNSDGNLVVMGRNMAVLILDNTGKERAVHRVTYGSRLFVDEADTVKRGQRIAEWDPYTRPIMTEVEGYVEFEDLVDGLSVSESADESTGITKRVVIDWRSTPRGSDLKPAMVIKDKAGKILKLSKGGDARFMLSVESILSVEPGAHVKAGDVIARLPMESAKTKDITGGLPRVAELFEARRPKDHAVIAEIDGTVRFGRDYKNKRRIIIEPNDDTIEPVEYLIPKGKPFHLQDGDVIEKGEYILDGNPAPHDILAIKGVEALASYLVNEIQEVYRLQGVLINDKHIEVIVRQMLQKVEITESGDTGYIPGDHVDRIELEEINERLIEEGKKPGSGNPVLLGITKASLQTPSFISAASFQETTRVLTEAAVAGKMDTLQGLKENVIVGRLIPAGTGGMTNQIRRIATARDELIIDERRKSSGSTEANAMLVDMTNNAAE.

The Zn(2+) site is built by C71, C73, C86, and C89. Residues D462, D464, and D466 each contribute to the Mg(2+) site. Zn(2+) contacts are provided by C811, C885, C892, and C895.

This sequence belongs to the RNA polymerase beta' chain family. The RNAP catalytic core consists of 2 alpha, 1 beta, 1 beta' and 1 omega subunit. When a sigma factor is associated with the core the holoenzyme is formed, which can initiate transcription. Mg(2+) is required as a cofactor. It depends on Zn(2+) as a cofactor.

The enzyme catalyses RNA(n) + a ribonucleoside 5'-triphosphate = RNA(n+1) + diphosphate. In terms of biological role, DNA-dependent RNA polymerase catalyzes the transcription of DNA into RNA using the four ribonucleoside triphosphates as substrates. The sequence is that of DNA-directed RNA polymerase subunit beta' from Brucella anthropi (strain ATCC 49188 / DSM 6882 / CCUG 24695 / JCM 21032 / LMG 3331 / NBRC 15819 / NCTC 12168 / Alc 37) (Ochrobactrum anthropi).